A 337-amino-acid chain; its full sequence is Inositol 2-dehydrogenase (337 aa).

The protein belongs to the Gfo/Idh/MocA family. Homotetramer.

It catalyses the reaction myo-inositol + NAD(+) = scyllo-inosose + NADH + H(+). Functionally, involved in the oxidation of myo-inositol (MI) to 2-keto-myo-inositol (2KMI or 2-inosose). This is Inositol 2-dehydrogenase from Burkholderia cenocepacia (strain HI2424).